The sequence spans 203 residues: Proteasome subunit beta 1 (203 aa).

A propeptide spans 1 to 7 (MTEKLKG) (removed in mature form; by autocatalysis). Threonine 8 acts as the Nucleophile in catalysis.

The protein belongs to the peptidase T1B family. The 20S proteasome core is composed of 14 alpha and 14 beta subunits that assemble into four stacked heptameric rings, resulting in a barrel-shaped structure. The two inner rings, each composed of seven catalytic beta subunits, are sandwiched by two outer rings, each composed of seven alpha subunits. The catalytic chamber with the active sites is on the inside of the barrel. Has a gated structure, the ends of the cylinder being occluded by the N-termini of the alpha-subunits. Is capped at one or both ends by the proteasome regulatory ATPase, PAN.

Its subcellular location is the cytoplasm. The catalysed reaction is Cleavage of peptide bonds with very broad specificity.. Its activity is regulated as follows. The formation of the proteasomal ATPase PAN-20S proteasome complex, via the docking of the C-termini of PAN into the intersubunit pockets in the alpha-rings, triggers opening of the gate for substrate entry. Interconversion between the open-gate and close-gate conformations leads to a dynamic regulation of the 20S proteasome proteolysis activity. Component of the proteasome core, a large protease complex with broad specificity involved in protein degradation. In Thermococcus kodakarensis (strain ATCC BAA-918 / JCM 12380 / KOD1) (Pyrococcus kodakaraensis (strain KOD1)), this protein is Proteasome subunit beta 1.